The primary structure comprises 608 residues: Bifunctional dihydrofolate reductase-thymidylate synthase (608 aa).

The region spanning 10–228 (DIYAICACCK…TTLDFIIYKK (219 aa)) is the DHFR domain. 14–15 (IC) serves as a coordination point for substrate. Position 16 (alanine 16) interacts with NADP(+). Valine 31 is a substrate binding site. 39-45 (GLGNKGV) provides a ligand contact to NADP(+). Residues aspartate 54 and asparagine 108 each contribute to the substrate site. NADP(+) is bound by residues 106 to 108 (RTN), 128 to 130 (SRT), and asparagine 144. The substrate site is built by isoleucine 164, tyrosine 170, and threonine 185. Residue 165-172 (GGSVVYQE) participates in NADP(+) binding. Residues 322-608 (YHPEYQYLNI…HEKISMDMAA (287 aa)) form a thymidylate synthase region. Arginine 345 serves as a coordination point for dUMP. Cysteine 490 is an active-site residue. Residues histidine 491, 509-513 (QRSCD), asparagine 521, and 551-553 (HVY) each bind dUMP.

The protein in the N-terminal section; belongs to the dihydrofolate reductase family. It in the C-terminal section; belongs to the thymidylate synthase family. In terms of assembly, homodimer.

It carries out the reaction (6S)-5,6,7,8-tetrahydrofolate + NADP(+) = 7,8-dihydrofolate + NADPH + H(+). The catalysed reaction is dUMP + (6R)-5,10-methylene-5,6,7,8-tetrahydrofolate = 7,8-dihydrofolate + dTMP. Its pathway is cofactor biosynthesis; tetrahydrofolate biosynthesis; 5,6,7,8-tetrahydrofolate from 7,8-dihydrofolate: step 1/1. Bifunctional enzyme. Involved in de novo dTMP biosynthesis. Key enzyme in folate metabolism. Catalyzes an essential reaction for de novo glycine and purine synthesis, DNA precursor synthesis, and for the conversion of dUMP to dTMP. This Plasmodium falciparum (isolate K1 / Thailand) protein is Bifunctional dihydrofolate reductase-thymidylate synthase.